The following is a 208-amino-acid chain: High frequency lysogenization protein HflD homolog (208 aa).

It belongs to the HflD family.

It localises to the cytoplasm. Its subcellular location is the cell inner membrane. The chain is High frequency lysogenization protein HflD homolog from Photorhabdus laumondii subsp. laumondii (strain DSM 15139 / CIP 105565 / TT01) (Photorhabdus luminescens subsp. laumondii).